The primary structure comprises 102 residues: Small ribosomal subunit protein uS10 (102 aa).

The protein belongs to the universal ribosomal protein uS10 family. In terms of assembly, part of the 30S ribosomal subunit.

Functionally, involved in the binding of tRNA to the ribosomes. In Clavibacter michiganensis subsp. michiganensis (strain NCPPB 382), this protein is Small ribosomal subunit protein uS10.